The primary structure comprises 328 residues: RNA-binding protein KhpB (328 aa).

Residues 3 to 53 (VFTGSTVEEAIQKGLKELDIPRMKAHIKVISREKKGFLGLFGKKPAQVDIE) form a jag_N domain region. Residues 54–180 (AISETTVVKA…GLKVETNFDI (127 aa)) are linker. T89 carries the phosphothreonine modification. Residues 181 to 258 (EQVATEVMAY…SRTFYVTINV (78 aa)) enclose the KH domain. In terms of domain architecture, R3H spans 263–328 (EHRAEVLQTY…PNRYVVVDTE (66 aa)).

This sequence belongs to the KhpB RNA-binding protein family. In terms of assembly, interacts with KhpA; the 2 proteins colocalize throughout the cell cycle, with some increase at midcell in dividing cells. Interacts with StkP which phosphorylates it, interacts with MltG, MreC, RodZ and YidC2. In terms of processing, phosphorylated on Thr-89 by StkP; there is another poorly phosphorylated residue in the protein. Dephosphorylated by PhpP.

It is found in the cytoplasm. A probable RNA chaperone. Forms a complex with KhpA which binds to cellular RNA and controls its expression. Plays a role in peptidoglycan (PG) homeostasis and cell length regulation. In terms of biological role, forms a complex with KhpA which presumably binds to about 170 cellular RNAs (mRNA, tRNA intergenic RNA and sRNAs); the proteins alone each bind the same set of RNAs. Suppresses the requirement for PBP2b (penA, a transpeptidase) in peripheral peptidoglycan (PG) synthesis. May function as a pleiotropic RNA chaperone controlling pneumococcal cell division, including PG homeostasis and regulating peripheral PG synthesis by the elongasome. The polypeptide is RNA-binding protein KhpB (Streptococcus pneumoniae serotype 2 (strain D39 / NCTC 7466)).